The following is a 943-amino-acid chain: Centromere protein C (943 aa).

A Glycyl lysine isopeptide (Lys-Gly) (interchain with G-Cter in SUMO2) cross-link involves residue lysine 45. The tract at residues 70 to 91 is disordered; sequence CIQSPSKECQKSHPKSVPVSSK. Residues serine 73 and serine 96 each carry the phosphoserine modification. Lysine 119 participates in a covalent cross-link: Glycyl lysine isopeptide (Lys-Gly) (interchain with G-Cter in SUMO2). Position 130 is a phosphothreonine (threonine 130). A Glycyl lysine isopeptide (Lys-Gly) (interchain with G-Cter in SUMO2) cross-link involves residue lysine 134. Position 146 is a phosphoserine (serine 146). A Glycyl lysine isopeptide (Lys-Gly) (interchain with G-Cter in SUMO2) cross-link involves residue lysine 180. At threonine 183 the chain carries Phosphothreonine. Serine 189 carries the phosphoserine modification. Glycyl lysine isopeptide (Lys-Gly) (interchain with G-Cter in SUMO2) cross-links involve residues lysine 212 and lysine 217. Basic and acidic residues predominate over residues 224 to 239; it reads VSDEEDKTSEGQERKP. The tract at residues 224-250 is disordered; the sequence is VSDEEDKTSEGQERKPSGSSQNRIRDS. Serine 225 is modified (phosphoserine). Residues lysine 238 and lysine 260 each participate in a glycyl lysine isopeptide (Lys-Gly) (interchain with G-Cter in SUMO2) cross-link. The Nuclear localization signal signature appears at 259–273; the sequence is KKSFSTLFLETVKRK. Serine 261 bears the Phosphoserine mark. Glycyl lysine isopeptide (Lys-Gly) (interchain with G-Cter in SUMO2) cross-links involve residues lysine 271, lysine 273, and lysine 297. Residues serine 316, serine 333, serine 376, and serine 397 each carry the phosphoserine modification. A disordered region spans residues 358-377; it reads LANDKHSHKPHPVETSQPSD. The disordered stretch occupies residues 403 to 513; that stretch reads YSKNAEKPSR…SKNKLVPEEV (111 aa). Residues 412–426 show a composition bias toward basic residues; sequence RSKRTIKQKQRRKFM. Basic and acidic residues-rich tracts occupy residues 438-463 and 488-510; these read QSKD…RNME and TRKD…KLVP. Serine 439 is subject to Phosphoserine. A Glycyl lysine isopeptide (Lys-Gly) (interchain with G-Cter in SUMO2) cross-link involves residue lysine 440. The Nuclear localization signal motif lies at 484 to 499; that stretch reads KKSSTRKDKEESKKKR. A Phosphoserine modification is found at serine 528. Residue lysine 534 forms a Glycyl lysine isopeptide (Lys-Gly) (interchain with G-Cter in SUMO2) linkage. Disordered stretches follow at residues 537-587 and 632-717; these read ESPV…ATKG and DCSR…KQSK. Serine 538 carries the post-translational modification Phosphoserine. The short motif at 558–574 is the Nuclear localization signal element; it reads RKSTKKTNQSSKNIRKK. The segment covering 570–583 has biased composition (basic residues); sequence NIRKKTIPLKRQKT. Residues 633 to 672 are compositionally biased toward polar residues; the sequence is CSRSTRSSKNEDNIMTAQNVPLKPQTSGYTCNIPTESNLD. A Glycyl lysine isopeptide (Lys-Gly) (interchain with G-Cter in SUMO2) cross-link involves residue lysine 677. 3 positions are modified to phosphoserine: serine 684, serine 709, and serine 710. Basic and acidic residues predominate over residues 706–715; sequence VHGSSDDSKQ. Lysine 727 is covalently cross-linked (Glycyl lysine isopeptide (Lys-Gly) (interchain with G-Cter in SUMO2)). Threonine 734 is modified (phosphothreonine). Residues 737 to 759 form an MIF2 homology domain II region; it reads VRRTKRTRLKPLEYWRGERIDYQ. A phosphoserine mark is found at serine 763 and serine 773. Positions 780–798 match the Nuclear localization signal motif; sequence KRKAKENIGKVNKKSNKKR. A Glycyl lysine isopeptide (Lys-Gly) (interchain with G-Cter in SUMO2) cross-link involves residue lysine 807. The MIF2 homology domain III stretch occupies residues 890–943; the sequence is LVFYVNFGDLLCTLHETPYILSTGDSFYVPSGNYYNIKNLRNEESVLLFTQIKR.

It belongs to the CENP-C/MIF2 family. In terms of assembly, oligomer. Component of the CENPA-NAC complex, at least composed of CENPA, CENPC, CENPH, CENPM, CENPN, CENPT and CENPU. The CENPA-NAC complex interacts with the CENPA-CAD complex, composed of CENPI, CENPK, CENPL, CENPO, CENPP, CENPQ, CENPR and CENPS. Binds to DAXX. Interacts with DNMT3B. Interacts directly with CENPA. Identified in a centromere complex containing histones H2A, H2B and H4, and at least CENPA, CENPB, CENPC, CENPT, CENPN, HJURP, SUPT16H, SSRP1 and RSF1. Interacts with MEIKIN.

It is found in the nucleus. The protein resides in the chromosome. The protein localises to the centromere. Its subcellular location is the kinetochore. Functionally, component of the CENPA-NAC (nucleosome-associated) complex, a complex that plays a central role in assembly of kinetochore proteins, mitotic progression and chromosome segregation. The CENPA-NAC complex recruits the CENPA-CAD (nucleosome distal) complex and may be involved in incorporation of newly synthesized CENPA into centromeres. CENPC recruits DNA methylation and DNMT3B to both centromeric and pericentromeric satellite repeats and regulates the histone code in these regions. The sequence is that of Centromere protein C (CENPC) from Homo sapiens (Human).